The following is a 556-amino-acid chain: 2-succinyl-5-enolpyruvyl-6-hydroxy-3-cyclohexene-1-carboxylate synthase (556 aa).

Belongs to the TPP enzyme family. MenD subfamily. Homodimer. It depends on Mg(2+) as a cofactor. The cofactor is Mn(2+). Thiamine diphosphate serves as cofactor.

It carries out the reaction isochorismate + 2-oxoglutarate + H(+) = 5-enolpyruvoyl-6-hydroxy-2-succinyl-cyclohex-3-ene-1-carboxylate + CO2. It participates in quinol/quinone metabolism; 1,4-dihydroxy-2-naphthoate biosynthesis; 1,4-dihydroxy-2-naphthoate from chorismate: step 2/7. Its pathway is quinol/quinone metabolism; menaquinone biosynthesis. Its function is as follows. Catalyzes the thiamine diphosphate-dependent decarboxylation of 2-oxoglutarate and the subsequent addition of the resulting succinic semialdehyde-thiamine pyrophosphate anion to isochorismate to yield 2-succinyl-5-enolpyruvyl-6-hydroxy-3-cyclohexene-1-carboxylate (SEPHCHC). The polypeptide is 2-succinyl-5-enolpyruvyl-6-hydroxy-3-cyclohexene-1-carboxylate synthase (Enterobacter sp. (strain 638)).